Here is a 1064-residue protein sequence, read N- to C-terminus: Alpha-aminoadipic semialdehyde synthase (1064 aa).

Residues 24-445 are lysine-ketoglutarate reductase; that stretch reads VNKWERRTPL…RACISYRGEL (422 aa). The residue at position 238 (threonine 238) is a Phosphothreonine. Position 458 is a phosphoserine (serine 458). The saccharopine dehydrogenase stretch occupies residues 583-1064; that stretch reads MTKKSGVLIL…YGIKLMEKAE (482 aa). L-saccharopine-binding positions include 703 to 704, aspartate 730, arginine 830, and 852 to 854; these read SY and TLR. 729 to 731 is a binding site for NADP(+); the sequence is LDP.

In the N-terminal section; belongs to the AlaDH/PNT family. This sequence in the C-terminal section; belongs to the saccharopine dehydrogenase family. In terms of assembly, homodimer. In terms of processing, phosphorylation of Ser-458 seems important for the LKR activity. Ubiquitous, with higher levels in flowers. Isoform Long is mostly present in young leaves, cotyledons, root tips and mature root parts. Whereas isoform Short is mostly expressed in cotyledons and at low levels in all root parts.

The protein localises to the cytoplasm. It carries out the reaction L-saccharopine + NADP(+) + H2O = L-lysine + 2-oxoglutarate + NADPH + H(+). The catalysed reaction is L-saccharopine + NAD(+) + H2O = (S)-2-amino-6-oxohexanoate + L-glutamate + NADH + H(+). It functions in the pathway amino-acid degradation; L-lysine degradation via saccharopine pathway; glutaryl-CoA from L-lysine: step 1/6. The protein operates within amino-acid degradation; L-lysine degradation via saccharopine pathway; glutaryl-CoA from L-lysine: step 2/6. Its activity is regulated as follows. The LKR activity is stimulated by NaCl. Its function is as follows. Bifunctional enzyme that catalyzes the first two steps in lysine degradation. The N-terminal and the C-terminal contain lysine-oxoglutarate reductase and saccharopine dehydrogenase activity, respectively. Negatively regulates free Lys accumulation in seeds. This chain is Alpha-aminoadipic semialdehyde synthase (LKR/SDH), found in Arabidopsis thaliana (Mouse-ear cress).